The sequence spans 261 residues: Proliferating cell nuclear antigen (261 aa).

An N6-acetyllysine mark is found at Lys14, Lys77, and Lys80. The DNA-binding element occupies 61 to 80 (RCDRNLAMGVNLTSMSKILK). A disulfide bond links Cys135 and Cys162. Lys164 is covalently cross-linked (Glycyl lysine isopeptide (Lys-Gly) (interchain with G-Cter in SUMO2); alternate). Residue Lys164 forms a Glycyl lysine isopeptide (Lys-Gly) (interchain with G-Cter in ubiquitin); alternate linkage. Position 211 is a phosphotyrosine; by EGFR (Tyr211). Lys248 bears the N6-acetyllysine mark. A Glycyl lysine isopeptide (Lys-Gly) (interchain with G-Cter in SUMO2) cross-link involves residue Lys254.

The protein belongs to the PCNA family. In terms of assembly, homotrimer. Interacts with p300/EP300; the interaction occurs on chromatin in UV-irradiated damaged cells. Interacts with CREBBP (via transactivation domain and C-terminus); the interaction occurs on chromatin in UV-irradiated damaged cells. Directly interacts with POLD1, POLD3 and POLD4 subunits of the DNA polymerase delta complex, POLD3 being the major interacting partner; the interaction with POLD3 is inhibited by CDKN1A/p21(CIP1). Forms a complex with activator 1 heteropentamer in the presence of ATP. Interacts with EXO1, POLH, POLK, DNMT1, ERCC5, FEN1, CDC6 and POLDIP2. Interacts with POLB. Interacts with APEX2; this interaction is triggered by reactive oxygen species and increased by misincorporation of uracil in nuclear DNA. Forms a ternary complex with DNTTIP2 and core histone. Interacts with KCTD10 and PPP1R15A. Interacts with SMARCA5/SNF2H. Interacts with BAZ1B/WSTF; the interaction is direct and is required for BAZ1B/WSTF binding to replication foci during S phase. Interacts with HLTF and SHPRH. Interacts with NUDT15; this interaction is disrupted in response to UV irradiation and acetylation. Interacts with CDKN1A/p21(CIP1) and CDT1; interacts via their PIP-box which also recruits the DCX(DTL) complex. The interaction with CDKN1A inhibits POLD3 binding. Interacts with DDX11. Interacts with EGFR; positively regulates PCNA. Interacts with PARPBP. Interacts (when ubiquitinated) with SPRTN; leading to enhance RAD18-mediated PCNA ubiquitination. Interacts (when polyubiquitinated) with ZRANB3. Interacts with SMARCAD1. Interacts with CDKN1C. Interacts with PCLAF (via PIP-box). Interacts with RTEL1 (via PIP-box); the interaction is direct and essential for the suppression of telomere fragility. Interacts with FAM111A (via PIP-box); the interaction is direct and required for PCNA loading on chromatin binding. Interacts with LIG1. Interacts with SETMAR. Interacts with ANKRD17. Interacts with FBXO18/FBH1 (via PIP-box); the interaction recruits the DCX(DTL) complex and promotes ubiquitination and degradation of FBXO18/FBH1. Interacts with POLN. Interacts with SDE2 (via PIP-box); the interaction is direct and prevents ultraviolet light induced monoubiquitination. Component of the replisome complex composed of at least DONSON, MCM2, MCM7, PCNA and TICRR; interaction at least with PCNA occurs during DNA replication. Interacts with MAPK15; the interaction is chromatin binding dependent and prevents MDM2-mediated PCNA destruction by inhibiting the association of PCNA with MDM2. Interacts with PARP10 (via PIP-box). Interacts with DDI2. Interacts with HMCES (via PIP-box). Interacts with TRAIP (via PIP-box). Interacts with UHRF2. Interacts with ALKBH2; this interaction is enhanced during the S-phase of the cell cycle. Interacts with ATAD5; the interaction promotes USP1-mediated PCNA deubiquitination. Interacts (when phosphorylated) with GRB2. Interacts with nuclear UNG; this interaction mediates UNG recruitment to S-phase replication foci. Interacts with ERCC6L2 (via an atypical PIP-box); this interaction facilitates cenrtomeric localization of ERCC6L2. Post-translationally, phosphorylated. Phosphorylation at Tyr-211 by EGFR stabilizes chromatin-associated PCNA. Acetylated by CREBBP and p300/EP300; preferentially acetylated by CREBBP on Lys-80, Lys-13 and Lys-14 and on Lys-77 by p300/EP300 upon loading on chromatin in response to UV irradiation. Lysine acetylation disrupts association with chromatin, hence promoting PCNA ubiquitination and proteasomal degradation in response to UV damage in a CREBBP- and EP300-dependent manner. Acetylation disrupts interaction with NUDT15 and promotes degradation. In terms of processing, ubiquitinated. Following DNA damage, can be either monoubiquitinated to stimulate direct bypass of DNA lesions by specialized DNA polymerases or polyubiquitinated to promote recombination-dependent DNA synthesis across DNA lesions by template switching mechanisms. Following induction of replication stress, monoubiquitinated by the UBE2B-RAD18 complex on Lys-164, leading to recruit translesion (TLS) polymerases, which are able to synthesize across DNA lesions in a potentially error-prone manner. An error-free pathway also exists and requires non-canonical polyubiquitination on Lys-164 through 'Lys-63' linkage of ubiquitin moieties by the E2 complex UBE2N-UBE2V2 and the E3 ligases, HLTF, RNF8 and SHPRH. This error-free pathway, also known as template switching, employs recombination mechanisms to synthesize across the lesion, using as a template the undamaged, newly synthesized strand of the sister chromatid. Monoubiquitination at Lys-164 also takes place in undamaged proliferating cells, and is mediated by the DCX(DTL) complex, leading to enhance PCNA-dependent translesion DNA synthesis. Sumoylated during S phase. Post-translationally, methylated on glutamate residues by ARMT1.

The protein localises to the nucleus. Functionally, auxiliary protein of DNA polymerase delta and epsilon, is involved in the control of eukaryotic DNA replication by increasing the polymerase's processibility during elongation of the leading strand. Induces a robust stimulatory effect on the 3'-5' exonuclease and 3'-phosphodiesterase, but not apurinic-apyrimidinic (AP) endonuclease, APEX2 activities. Has to be loaded onto DNA in order to be able to stimulate APEX2. Plays a key role in DNA damage response (DDR) by being conveniently positioned at the replication fork to coordinate DNA replication with DNA repair and DNA damage tolerance pathways. Acts as a loading platform to recruit DDR proteins that allow completion of DNA replication after DNA damage and promote postreplication repair: Monoubiquitinated PCNA leads to recruitment of translesion (TLS) polymerases, while 'Lys-63'-linked polyubiquitination of PCNA is involved in error-free pathway and employs recombination mechanisms to synthesize across the lesion. The sequence is that of Proliferating cell nuclear antigen (PCNA) from Bos taurus (Bovine).